Consider the following 200-residue polypeptide: Probable molybdenum cofactor guanylyltransferase (200 aa).

Residues 9–11 (LAG), Lys-21, Asp-69, and Asp-100 each bind GTP. Position 100 (Asp-100) interacts with Mg(2+).

This sequence belongs to the MobA family. Mg(2+) serves as cofactor.

The protein resides in the cytoplasm. The catalysed reaction is Mo-molybdopterin + GTP + H(+) = Mo-molybdopterin guanine dinucleotide + diphosphate. In terms of biological role, transfers a GMP moiety from GTP to Mo-molybdopterin (Mo-MPT) cofactor (Moco or molybdenum cofactor) to form Mo-molybdopterin guanine dinucleotide (Mo-MGD) cofactor. The chain is Probable molybdenum cofactor guanylyltransferase from Bacillus cereus (strain ZK / E33L).